A 395-amino-acid polypeptide reads, in one-letter code: Guanine nucleotide-binding protein subunit beta-5 (395 aa).

WD repeat units lie at residues 103-142, 145-184, 193-234, 236-278, 279-318, 320-362, and 365-394; these read GHGNKVLCMDWCKDKRRIVSSSQDGKVIVWDSFTTNKEHA, MPCTWVMACAYAPSGCAIACGGLDNKCSVYPLTFDKNENM, MHTN…QSFH, HGAD…QAFE, THESDVNSVRYYPSGDAFASGSDDATCRLYDLRADREVAI, SKES…RVSI, and GHENRVSTLRVSPDGTAFCSGSWDHTLRVW.

This sequence belongs to the WD repeat G protein beta family. As to quaternary structure, component of a complex composed of RGS9 (isoform RGS9-1), GNB5 and RGS9BP; within this complex, the presence of GNB5 stabilizes both itself and RGS9 and increases RGS9 GTPase-activating protein (GAP) activity. Interacts with RGS7, forming the RGS7-GNB5 complex; within this complex, the presence of GNB5 increases RGS7 GTPase-activating protein (GAP) activity. Interacts with GPR158; promotes the GTPase activator activity of the RGS7-GNB5 complex in absence of glycine, in contrast GTPase activator activity of the RGS7-GNB5 complex is inhibited in presence of glycine. Interacts with RGS6. As to expression, isoform 1 is only detected in retina. Isoform 2 is detected in brain (at protein level). Isoform 2 is detected in brain.

The protein localises to the membrane. Its function is as follows. Enhances GTPase-activating protein (GAP) activity of regulator of G protein signaling (RGS) proteins, such as RGS7 and RGS9, hence involved in the termination of the signaling initiated by the G protein coupled receptors (GPCRs) by accelerating the GTP hydrolysis on the G-alpha subunits, thereby promoting their inactivation. Increases RGS7 GTPase-activating protein (GAP) activity, thereby regulating mood and cognition. Increases RGS9 GTPase-activating protein (GAP) activity, hence contributes to the deactivation of G protein signaling initiated by D(2) dopamine receptors. May play an important role in neuronal signaling, including in the parasympathetic, but not sympathetic, control of heart rate. The protein is Guanine nucleotide-binding protein subunit beta-5 (Gnb5) of Mus musculus (Mouse).